Consider the following 77-residue polypeptide: Delta-conotoxin GmVIA (77 aa).

Residues 1 to 22 (MKLTCMMIVAVLFLTAWTFVTA) form the signal peptide. A propeptide spanning residues 23 to 48 (DDSGNGMEILFPKAGHEMENLEVSNR) is cleaved from the precursor. 3 disulfide bridges follow: Cys-52–Cys-67, Cys-59–Cys-72, and Cys-66–Cys-76.

The protein belongs to the conotoxin O1 superfamily. In terms of tissue distribution, expressed by the venom duct.

It is found in the secreted. Its function is as follows. Delta-conotoxins bind to site 6 of voltage-gated sodium channels (Nav) and inhibit the inactivation process. This toxin shows weak activity on rNav1.2/SCN2A (EC(50)=2.5 uM) and rNav1.4/SCN4A (EC(50)=4.8 uM). In vivo, injection of this peptide in the head region of garden snail induces retraction of the head and body into shell. This is followed by secretion of viscous green slime and a convulsive undulation into and out of the shell. No apparent biological activity was observed when a much greater dose of peptide was injected intraperitoneally into mice. The protein is Delta-conotoxin GmVIA of Conus gloriamaris (Glory-of-the-Sea cone).